The chain runs to 1126 residues: Ubiquitin carboxyl-terminal hydrolase 16/45 (1126 aa).

The span at 1-15 (MVKKRQADSRDHDCS) shows a compositional bias: basic and acidic residues. Residues 1-44 (MVKKRQADSRDHDCSTDSGNEDLHHRKGLGSPGQSDGATPTTAS) are disordered. A compositionally biased stretch (polar residues) spans 32–44 (PGQSDGATPTTAS). The segment at 43 to 181 (ASCQHIKKAV…ELVKKLAQKP (139 aa)) adopts a UBP-type zinc-finger fold. Residues Cys45, His47, Cys70, Cys73, Cys111, Cys114, Cys119, His126, His130, His139, Cys152, and Cys155 each coordinate Zn(2+). 2 stretches are compositionally biased toward low complexity: residues 215–229 (GGSF…SLAA) and 254–264 (SSGLSTSDSLT). Residues 215–264 (GGSFDDSSSRGSLAAAGGGGGVGSSRNRQVAIPMPPPEPSSGLSTSDSLT) form a disordered region. Cys315 (nucleophile) is an active-site residue. Disordered regions lie at residues 513-547 (KPQP…INTK), 570-762 (ASLG…SGSS), and 795-833 (EQGA…ARTK). Positions 524–539 (PELSLTSSSSSVTPST) are enriched in low complexity. Positions 586 to 598 (QRKAKRAAKKRQK) are enriched in basic residues. Composition is skewed to low complexity over residues 599 to 614 (SSLN…GNEL) and 646 to 657 (TEDSTTSSVTTS). Over residues 674-701 (APSTNNVPSSTASLTAPSKTYMDSNGNA) the composition is skewed to polar residues. Positions 705-718 (GEKRDDTPEHMDKD) are enriched in basic and acidic residues. Positions 730-762 (ATSPAPTATNSSTSTSATGNNNSVAGSGLSGSS) are enriched in low complexity. Residues 807 to 816 (GEAKAIEQPE) are compositionally biased toward basic and acidic residues. The segment covering 821 to 830 (QAQAMAQAQA) has biased composition (low complexity). Residue His984 is the Proton acceptor of the active site. The segment at 1037-1089 (LKVLDDSDDFSNSSSNSSTSDESQTPATPLEEQQTQQAQQPQQPQQLEEAANV) is disordered. The segment covering 1046 to 1086 (FSNSSSNSSTSDESQTPATPLEEQQTQQAQQPQQPQQLEEA) has biased composition (low complexity).

It belongs to the peptidase C19 family.

It carries out the reaction Thiol-dependent hydrolysis of ester, thioester, amide, peptide and isopeptide bonds formed by the C-terminal Gly of ubiquitin (a 76-residue protein attached to proteins as an intracellular targeting signal).. Functionally, involved in the regulation of DNA damage repair. In Drosophila melanogaster (Fruit fly), this protein is Ubiquitin carboxyl-terminal hydrolase 16/45.